The chain runs to 86 residues: Small nuclear ribonucleoprotein F (86 aa).

N-acetylserine is present on serine 2. A Sm domain is found at 6–78; sequence NPKPFLNGLT…VLYIRGVEEE (73 aa).

The protein belongs to the snRNP Sm proteins family. SmF/LSm6 subfamily. As to quaternary structure, core component of the spliceosomal U1, U2, U4 and U5 small nuclear ribonucleoproteins (snRNPs), the building blocks of the spliceosome. Most spliceosomal snRNPs contain a common set of Sm proteins, SNRPB, SNRPD1, SNRPD2, SNRPD3, SNRPE, SNRPF and SNRPG that assemble in a heptameric protein ring on the Sm site of the small nuclear RNA to form the core snRNP. Component of the U1 snRNP. The U1 snRNP is composed of the U1 snRNA and the 7 core Sm proteins SNRPB, SNRPD1, SNRPD2, SNRPD3, SNRPE, SNRPF and SNRPG, and at least three U1 snRNP-specific proteins SNRNP70/U1-70K, SNRPA/U1-A and SNRPC/U1-C. Component of the U4/U6-U5 tri-snRNP complex composed of the U4, U6 and U5 snRNAs and at least PRPF3, PRPF4, PRPF6, PRPF8, PRPF31, SNRNP200, TXNL4A, SNRNP40, SNRPB, SNRPD1, SNRPD2, SNRPD3, SNRPE, SNRPF, SNRPG, DDX23, CD2BP2, PPIH, SNU13, EFTUD2, SART1 and USP39, plus LSM2, LSM3, LSM4, LSM5, LSM6, LSM7 and LSM8. Component of the U7 snRNP complex, or U7 Sm protein core complex, that is composed of the U7 snRNA and at least LSM10, LSM11, SNRPB, SNRPD3, SNRPE, SNRPF and SNRPG; the complex does not contain SNRPD1 and SNRPD2. Component of the minor spliceosome, which splices U12-type introns. Part of the SMN-Sm complex that contains SMN1, GEMIN2/SIP1, DDX20/GEMIN3, GEMIN4, GEMIN5, GEMIN6, GEMIN7, GEMIN8, STRAP/UNRIP and the Sm proteins SNRPB, SNRPD1, SNRPD2, SNRPD3, SNRPE, SNRPF and SNRPG; catalyzes core snRNPs assembly. Forms a 6S pICln-Sm complex composed of CLNS1A/pICln, SNRPD1, SNRPD2, SNRPE, SNRPF and SNRPG; ring-like structure where CLNS1A/pICln mimics additional Sm proteins and which is unable to assemble into the core snRNP. Interacts with GEMIN2 (via N-terminus); the interaction is direct. Interacts with SNRPD2; the interaction is direct. Interacts with SNRPE; the interaction is direct.

The protein resides in the cytoplasm. It is found in the cytosol. Its subcellular location is the nucleus. Its function is as follows. Plays a role in pre-mRNA splicing as a core component of the spliceosomal U1, U2, U4 and U5 small nuclear ribonucleoproteins (snRNPs), the building blocks of the spliceosome. Component of both the pre-catalytic spliceosome B complex and activated spliceosome C complexes. As a component of the minor spliceosome, involved in the splicing of U12-type introns in pre-mRNAs. As part of the U7 snRNP it is involved in histone 3'-end processing. The protein is Small nuclear ribonucleoprotein F (SNRPF) of Homo sapiens (Human).